Here is a 132-residue protein sequence, read N- to C-terminus: Hydrogenase maturation factor HypA (132 aa).

His-2 lines the Ni(2+) pocket. Positions 74, 77, 91, and 94 each coordinate Zn(2+).

This sequence belongs to the HypA/HybF family.

In terms of biological role, involved in the maturation of [NiFe] hydrogenases. Required for nickel insertion into the metal center of the hydrogenase. This chain is Hydrogenase maturation factor HypA, found in Synechococcus sp. (strain JA-2-3B'a(2-13)) (Cyanobacteria bacterium Yellowstone B-Prime).